The following is a 60-amino-acid chain: Mastoparan-B (60 aa).

The first 27 residues, Met1 to Ala27, serve as a signal peptide directing secretion. AXPX repeat units lie at residues Ala27–Leu30, Ala31–Leu34, Ala35–Asn38, and Ala41–Glu44. Residues Asp28–Ala45 constitute a propeptide that is removed on maturation. Leu59 is subject to Leucine amide.

This sequence belongs to the MCD family. Mastoparan subfamily. Expressed by the venom gland.

The protein localises to the secreted. The protein resides in the target cell membrane. Its function is as follows. Antimicrobial and mast cell degranulating peptide. Has broad spectrum antibacterial activity against both Gram-positive (S.aureus MIC=96-128 ug/ml, S.xylosus MIC=2 ug/ml, S.alactolyticus MIC=32 ug/ml, and S.choleraesuis MIC=32 ug/ml) and Gram-negative bacteria (C.koseri MIC=6 ug/ml, E.coli MIC=3-16 ug/ml, K.pneumoniae MIC=128 ug/ml, P.aerugiosa MIC=128 ug/ml, S.typhimurium MIC=64 ug/ml, V.parahamelytics MIC=32 ug/ml, and S.enterica), as well as on fungi (C.albicans, C.glabrata, and C.neoformans). Does not show antimicrobial activity against S.mutans. Affects membrane permeability of E.coli. Also acts as a mast cell degranulating peptide, that causes liberation of histamine from rat peritoneal mast cells. Its mast cell degranulation activity may be related to the activation of G-protein coupled receptors in mast cells as well as interaction with other proteins located in cell endosomal membranes in the mast cells. Whether this peptide shows hemolytic activities is controversial, as Lin et al., 2011 and Ho et al., 1991 found a hemolytic activity on sheep, chicken and human erythrocytes, whereas Kim et al., 2016 found no hemolytic activity on human erythrocytes. In vivo, induces edema in the rat paw. The protein is Mastoparan-B of Vespa basalis (Hornet).